The following is a 426-amino-acid chain: 3-phosphoshikimate 1-carboxyvinyltransferase (426 aa).

The 3-phosphoshikimate site is built by lysine 20, serine 21, and arginine 25. A phosphoenolpyruvate-binding site is contributed by lysine 20. Phosphoenolpyruvate contacts are provided by glycine 92 and arginine 120. 3-phosphoshikimate is bound by residues serine 166, glutamine 168, aspartate 312, and lysine 339. Glutamine 168 lines the phosphoenolpyruvate pocket. The active-site Proton acceptor is the aspartate 312. Arginine 385 provides a ligand contact to phosphoenolpyruvate.

The protein belongs to the EPSP synthase family. Monomer.

It is found in the cytoplasm. It carries out the reaction 3-phosphoshikimate + phosphoenolpyruvate = 5-O-(1-carboxyvinyl)-3-phosphoshikimate + phosphate. It participates in metabolic intermediate biosynthesis; chorismate biosynthesis; chorismate from D-erythrose 4-phosphate and phosphoenolpyruvate: step 6/7. Its function is as follows. Catalyzes the transfer of the enolpyruvyl moiety of phosphoenolpyruvate (PEP) to the 5-hydroxyl of shikimate-3-phosphate (S3P) to produce enolpyruvyl shikimate-3-phosphate and inorganic phosphate. The polypeptide is 3-phosphoshikimate 1-carboxyvinyltransferase (Streptococcus suis (strain 98HAH33)).